A 451-amino-acid polypeptide reads, in one-letter code: Alpha-galactosidase (451 aa).

5 to 71 (PKITFIGAGS…ASGRITCHTN (67 aa)) is a binding site for NAD(+). Residue Asn151 participates in substrate binding. Position 173 (Cys173) interacts with Mn(2+). His174 serves as the catalytic Proton donor. His203 is a Mn(2+) binding site. Arg287 contributes to the substrate binding site.

The protein belongs to the glycosyl hydrolase 4 family. As to quaternary structure, homodimer. Mn(2+) is required as a cofactor. NAD(+) serves as cofactor.

It catalyses the reaction Hydrolysis of terminal, non-reducing alpha-D-galactose residues in alpha-D-galactosides, including galactose oligosaccharides, galactomannans and galactolipids.. The protein is Alpha-galactosidase (melA) of Salmonella typhimurium (strain LT2 / SGSC1412 / ATCC 700720).